The following is a 276-amino-acid chain: Chlorophyll a-b binding protein CP29.3, chloroplastic (276 aa).

Residues M1–A29 constitute a chloroplast transit peptide. A disordered region spans residues M1–D53. Positions G36–R48 are enriched in basic residues. W59 lines the chlorophyll b pocket. 3 residues coordinate chlorophyll a: F79, E141, and H144. A helical transmembrane segment spans residues W147–Q167. L181 is a chlorophyll a binding site. Residues L185–F205 traverse the membrane as a helical segment. Residues E204 and R207 each coordinate chlorophyll b. Positions 242, 245, 247, and 259 each coordinate chlorophyll a. A helical membrane pass occupies residues L248–V268.

This sequence belongs to the light-harvesting chlorophyll a/b-binding (LHC) protein family. In terms of assembly, the LHC complex consists of chlorophyll a-b binding proteins. It depends on Binds at least 14 chlorophylls (8 Chl-a and 6 Chl-b) and carotenoids such as lutein and neoxanthin. as a cofactor. Post-translationally, photoregulated by reversible phosphorylation of its threonine residues.

Its subcellular location is the plastid. The protein resides in the chloroplast thylakoid membrane. Its function is as follows. The light-harvesting complex (LHC) functions as a light receptor, it captures and delivers excitation energy to photosystems with which it is closely associated. The polypeptide is Chlorophyll a-b binding protein CP29.3, chloroplastic (LHCB4.3) (Arabidopsis thaliana (Mouse-ear cress)).